The primary structure comprises 224 residues: Small ribosomal subunit protein uS3c (224 aa).

Residues 43–124 enclose the KH type-2 domain; the sequence is IKNYIQKNRK…RLNIAIEKVK (82 aa).

Belongs to the universal ribosomal protein uS3 family. Part of the 30S ribosomal subunit.

Its subcellular location is the plastid. It localises to the chloroplast. This chain is Small ribosomal subunit protein uS3c (rps3), found in Saccharum hybrid (Sugarcane).